The chain runs to 148 residues: Lysozyme C, milk isozyme (148 aa).

Residues 1–18 form the signal peptide; the sequence is MKALLIVGLLLLSVAVQG. The C-type lysozyme domain maps to 19-148; the sequence is KKFQRCELAR…LRSYVQGCRV (130 aa). Disulfide bonds link Cys24/Cys146, Cys48/Cys134, Cys83/Cys99, and Cys95/Cys113. Residues Glu53 and Asp71 contribute to the active site.

It belongs to the glycosyl hydrolase 22 family.

It carries out the reaction Hydrolysis of (1-&gt;4)-beta-linkages between N-acetylmuramic acid and N-acetyl-D-glucosamine residues in a peptidoglycan and between N-acetyl-D-glucosamine residues in chitodextrins.. Its function is as follows. Lysozymes have primarily a bacteriolytic function; those in tissues and body fluids are associated with the monocyte-macrophage system and enhance the activity of immunoagents. This Bos taurus (Bovine) protein is Lysozyme C, milk isozyme.